The primary structure comprises 254 residues: Alcohol dehydrogenase (254 aa).

10 to 33 (FVAGLGGIGLDTSREIVKSGPKNL) contacts NAD(+). Serine 138 lines the substrate pocket. Tyrosine 151 (proton acceptor) is an active-site residue.

Belongs to the short-chain dehydrogenases/reductases (SDR) family. In terms of assembly, homodimer.

The enzyme catalyses a primary alcohol + NAD(+) = an aldehyde + NADH + H(+). The catalysed reaction is a secondary alcohol + NAD(+) = a ketone + NADH + H(+). The sequence is that of Alcohol dehydrogenase (Adh) from Drosophila picticornis (Fruit fly).